A 378-amino-acid chain; its full sequence is Cytochrome b (378 aa).

A run of 4 helical transmembrane segments spans residues 34 to 54 (FGSL…FLAM), 78 to 99 (WLLR…YLHV), 114 to 134 (WLIG…GYVL), and 179 to 199 (FFTF…IHLL). Heme b-binding residues include histidine 84 and histidine 98. Residues histidine 183 and histidine 197 each contribute to the heme b site. Position 202 (histidine 202) interacts with a ubiquinone. 4 helical membrane passes run 227–247 (FKDI…VLIS), 289–309 (LGGV…PFYN), 321–341 (INQV…WIGA), and 348–368 (YVLI…VNPL).

This sequence belongs to the cytochrome b family. The main subunits of complex b-c1 are: cytochrome b, cytochrome c1 and the Rieske protein. Heme b is required as a cofactor.

It is found in the mitochondrion inner membrane. Functionally, component of the ubiquinol-cytochrome c reductase complex (complex III or cytochrome b-c1 complex) that is part of the mitochondrial respiratory chain. The b-c1 complex mediates electron transfer from ubiquinol to cytochrome c. Contributes to the generation of a proton gradient across the mitochondrial membrane that is then used for ATP synthesis. The protein is Cytochrome b (mt:Cyt-b) of Drosophila sechellia (Fruit fly).